We begin with the raw amino-acid sequence, 435 residues long: SGFHLSFSFFRRAVCGIRPTLSGFIVGGTVAPINSWPWQAKLRIAGNFLCGGSLIQPEWVLTAAHCVEGESPSIIKVTLGAHYLSTAQVVGTEQYFDVVQIIQHENYKMPKRFSNDVALLKLSRPAALRNGVGLVCLSDDQFQRPFNGTSCWTTGWGRLSWPGPVAKELMQVDLPLVSPQNCLSSYPNGYDPNTMICAGRSQGGTGACRGDSGGPLVCEFKGKWYLEGVTSWGQLPCDLPNKPTVYADVRKLKSWITGKISRSPALKVATNCSSVLNNTLKSPGYPDSYPINMFCVYRVPIPCDTELVIHFNSFHLENHVFCWYDRLRITDGSNRVIGTYCGQQTGRSVLVNDTVAVLTFKTDRSLNSSGFHLSFSFFPRGNATLLPFTTPTQTTTQRPTTTPTPGCGVVQNNTLRSPGYPSNYPRNTHCVYRVF.

An N-terminal signal peptide occupies residues 1–16 (SGFHLSFSFFRRAVCG). One can recognise a Peptidase S1 domain in the interval 25–261 (IVGGTVAPIN…LKSWITGKIS (237 aa)). Cysteine 50 and cysteine 66 are disulfide-bonded. Catalysis depends on charge relay system residues histidine 65 and aspartate 116. 4 disulfides stabilise this stretch: cysteine 151–cysteine 218, cysteine 182–cysteine 197, cysteine 208–cysteine 237, and cysteine 322–cysteine 341. Serine 212 (charge relay system) is an active-site residue. Residues 256–378 (ITGKISRSPA…SGFHLSFSFF (123 aa)) enclose the CUB domain.

It belongs to the peptidase S1 family. Component of the acid-insoluble organic matrix of the aragonitic skeleton (at protein level).

It localises to the secreted. The chain is CUB and peptidase domain-containing protein 1 from Acropora millepora (Staghorn coral).